The primary structure comprises 417 residues: Serine hydroxymethyltransferase 2 (417 aa).

Residues Leu-121 and 125–127 (GHL) contribute to the (6S)-5,6,7,8-tetrahydrofolate site. Position 230 is an N6-(pyridoxal phosphate)lysine (Lys-230). 355–357 (SPF) contacts (6S)-5,6,7,8-tetrahydrofolate.

The protein belongs to the SHMT family. Homodimer. It depends on pyridoxal 5'-phosphate as a cofactor.

Its subcellular location is the cytoplasm. It catalyses the reaction (6R)-5,10-methylene-5,6,7,8-tetrahydrofolate + glycine + H2O = (6S)-5,6,7,8-tetrahydrofolate + L-serine. The protein operates within one-carbon metabolism; tetrahydrofolate interconversion. Its pathway is amino-acid biosynthesis; glycine biosynthesis; glycine from L-serine: step 1/1. Functionally, catalyzes the reversible interconversion of serine and glycine with tetrahydrofolate (THF) serving as the one-carbon carrier. This reaction serves as the major source of one-carbon groups required for the biosynthesis of purines, thymidylate, methionine, and other important biomolecules. Also exhibits THF-independent aldolase activity toward beta-hydroxyamino acids, producing glycine and aldehydes, via a retro-aldol mechanism. In Pseudomonas savastanoi pv. phaseolicola (strain 1448A / Race 6) (Pseudomonas syringae pv. phaseolicola (strain 1448A / Race 6)), this protein is Serine hydroxymethyltransferase 2.